The following is a 310-amino-acid chain: Quinolinate synthase (310 aa).

The iminosuccinate site is built by H27 and S44. A [4Fe-4S] cluster-binding site is contributed by C89. Iminosuccinate contacts are provided by residues 115–117 (YVN) and S132. C175 contributes to the [4Fe-4S] cluster binding site. Iminosuccinate-binding positions include 201–203 (HPE) and T222. C267 is a [4Fe-4S] cluster binding site.

It belongs to the quinolinate synthase family. Type 2 subfamily. The cofactor is [4Fe-4S] cluster.

The protein resides in the cytoplasm. It carries out the reaction iminosuccinate + dihydroxyacetone phosphate = quinolinate + phosphate + 2 H2O + H(+). It functions in the pathway cofactor biosynthesis; NAD(+) biosynthesis; quinolinate from iminoaspartate: step 1/1. In terms of biological role, catalyzes the condensation of iminoaspartate with dihydroxyacetone phosphate to form quinolinate. The sequence is that of Quinolinate synthase from Thermus thermophilus (strain ATCC BAA-163 / DSM 7039 / HB27).